A 308-amino-acid chain; its full sequence is Solute carrier family 25 member 47 (308 aa).

Solcar repeat units lie at residues 1 to 80, 93 to 206, and 215 to 302; these read MDFV…CLAH, PTKA…LCEW, and PDVP…VLRL. Helical transmembrane passes span 3–23, 49–69, 98–116, 190–210, 217–237, and 273–293; these read FVAGAIGGVCGVAVGYPLDTV, VWGFYRGLSLPVCTVSLVSSV, ITLSGCASGLVRVFLTSPT, GHSFATYFLSYAVLCEWLSPA, VPGVLVAGGCAGVLAWAVATP, and VLFKGLVLNCCRAFPVNMVVF.

Belongs to the mitochondrial carrier (TC 2.A.29) family. As to expression, specifically expressed in liver.

It is found in the mitochondrion inner membrane. The protein resides in the mitochondrion outer membrane. The enzyme catalyses NAD(+)(in) = NAD(+)(out). It carries out the reaction acetyl-CoA(in) = acetyl-CoA(out). Its function is as follows. Mitochondrial NAD(+) transporter that acts as a 'metabolic gate' in hepatic lipogenesis. Provides NAD(+) substrate to mitochondrial SIRT3 deacetylase and enables its NAD(+)-dependent activities in mitochondrial energy metabolism. This triggers downstream activation of PRKAA1/AMPK-alpha signaling cascade that negatively regulates sterol regulatory element-binding protein (SREBP) transcriptional activities and ATP-consuming lipogenesis to restore cellular energy balance. May transport other mitochondrial metabolites having an aromatic nucleotide and phosphate groups, such as acetyl-CoA. Does not transport amino acids. The transport mechanism remains to be elucidated. The sequence is that of Solute carrier family 25 member 47 from Homo sapiens (Human).